The sequence spans 293 residues: Ribosomal RNA small subunit methyltransferase H (293 aa).

Residues 34-36 (GGH), Asp-54, Leu-86, Asp-101, and Gln-108 contribute to the S-adenosyl-L-methionine site.

The protein belongs to the methyltransferase superfamily. RsmH family.

It is found in the cytoplasm. The enzyme catalyses cytidine(1402) in 16S rRNA + S-adenosyl-L-methionine = N(4)-methylcytidine(1402) in 16S rRNA + S-adenosyl-L-homocysteine + H(+). Specifically methylates the N4 position of cytidine in position 1402 (C1402) of 16S rRNA. The polypeptide is Ribosomal RNA small subunit methyltransferase H (Elusimicrobium minutum (strain Pei191)).